The chain runs to 229 residues: Ribose-5-phosphate isomerase A (229 aa).

Substrate contacts are provided by residues 28 to 31 (TGST), 85 to 88 (DGAD), and 98 to 101 (KGRG). The active-site Proton acceptor is the Glu107. Lys125 is a substrate binding site.

It belongs to the ribose 5-phosphate isomerase family. In terms of assembly, homodimer.

The catalysed reaction is aldehydo-D-ribose 5-phosphate = D-ribulose 5-phosphate. It functions in the pathway carbohydrate degradation; pentose phosphate pathway; D-ribose 5-phosphate from D-ribulose 5-phosphate (non-oxidative stage): step 1/1. In terms of biological role, catalyzes the reversible conversion of ribose-5-phosphate to ribulose 5-phosphate. The sequence is that of Ribose-5-phosphate isomerase A from Thermococcus kodakarensis (strain ATCC BAA-918 / JCM 12380 / KOD1) (Pyrococcus kodakaraensis (strain KOD1)).